A 241-amino-acid polypeptide reads, in one-letter code: Leucyl/phenylalanyl-tRNA--protein transferase (241 aa).

This sequence belongs to the L/F-transferase family.

The protein resides in the cytoplasm. The enzyme catalyses N-terminal L-lysyl-[protein] + L-leucyl-tRNA(Leu) = N-terminal L-leucyl-L-lysyl-[protein] + tRNA(Leu) + H(+). It catalyses the reaction N-terminal L-arginyl-[protein] + L-leucyl-tRNA(Leu) = N-terminal L-leucyl-L-arginyl-[protein] + tRNA(Leu) + H(+). It carries out the reaction L-phenylalanyl-tRNA(Phe) + an N-terminal L-alpha-aminoacyl-[protein] = an N-terminal L-phenylalanyl-L-alpha-aminoacyl-[protein] + tRNA(Phe). Its function is as follows. Functions in the N-end rule pathway of protein degradation where it conjugates Leu, Phe and, less efficiently, Met from aminoacyl-tRNAs to the N-termini of proteins containing an N-terminal arginine or lysine. This chain is Leucyl/phenylalanyl-tRNA--protein transferase, found in Colwellia psychrerythraea (strain 34H / ATCC BAA-681) (Vibrio psychroerythus).